Here is a 119-residue protein sequence, read N- to C-terminus: Large ribosomal subunit protein uL22 (119 aa).

It belongs to the universal ribosomal protein uL22 family. In terms of assembly, part of the 50S ribosomal subunit.

This protein binds specifically to 23S rRNA; its binding is stimulated by other ribosomal proteins, e.g. L4, L17, and L20. It is important during the early stages of 50S assembly. It makes multiple contacts with different domains of the 23S rRNA in the assembled 50S subunit and ribosome. Functionally, the globular domain of the protein is located near the polypeptide exit tunnel on the outside of the subunit, while an extended beta-hairpin is found that lines the wall of the exit tunnel in the center of the 70S ribosome. The polypeptide is Large ribosomal subunit protein uL22 (Rickettsia akari (strain Hartford)).